We begin with the raw amino-acid sequence, 1497 residues long: MSLLGTINPNINPERTVAGRGTQEEEGEIARVEHNHHNNAASVSTDETVLERSKEIGDEDVAVEEVTRLARQLTRQSTRFSTSGNVENPFLETKEDSTLNPLSPNFKAKNWMKNLLALSSRDPERYPKRVAGVAFKNLSVHGYGSPTDYQKDVFNSVLEVGTLVRRIMGTGKQKIQILRDFDGLVKSGEMLVVLGRPGSGCSTFLKTISGEMNGIYMDEKSYLNYQGISSKQMRKQFRGEAIYTAETDVHFPQLTVGDTLKFAALARAPRNRLPGVSREQYAVHMRDVVMAMLGLTHTMNTRVGNDFVRGVSGGERKRVSIAEATLSGSPLQCWDNSTRGLDSANALEFCKTLNLMTKYAGATVAVAIYQASQSAYDVFDKVTVLYEGRQIYFGRTDEAKEFFTNMGFECPERQTTADFLTSLTSPAERVVKPGFEGKVPQTPDEFVRAWKSSEAYAKLMREIEEYDREFPIGGESLNQFIESRRAMQAKNQRVKSPYTISVWQQIELCMIRGFQRLKGDSSLTMSQLIGNFIMALVIGSVFYNLPDDTSSFYARGALLFFAVLLNAFSSALEILTLYAQRPIVEKQARYAMYHPFAEAIASMLCDMPYKITNAIIFNLTLYFMTNLRREPGAFFVFLLFSFVTTLTMSMLFRTMAASSRTLSQALVPAAILILGLVIYTGFTIPTRNMLGWSRWMNYIDPIAYGFESLMVNEFHNRQFLCPDSAFVPSSGAYDSQPLAYRVCSTVGSVSGSRYVQGDDYLNQSFQYYKSHQWRNLGIMFGFMFFFMFTYLTATEYISESKSKGEVLLFRRGHAQPTGSHDVEKSPEVSSAAKTDEASSKEATGAIQRQEAIFQWKDVCYDIKIKGEPRRILDHVDGWVKPGTCTALMGVSGAGKTTLLDVLATRVTMGVVSGEMLVDGRPRDQSFQRKTGYVQQQDLHLHTTTVREALRFSALLRQPAHVPRQEKIDYVEEVIKLLGMESYADAVVGVPGEGLNVEQRKRLTIGVELAAKPQLLLFLDEPTSGLDSQTSWSILDLIDTLTKHGQAILCTIHQPSAMLFQRFDRLLFLAKGGKTVYFGEIGEKSSTLASYFERNGAPKLPPDANPAEWMLEVIGAAPGSHSDIDWPAVWRDSPERRAVHEHLDELKRTLSQKPIDPSKADPGSYDEFAAPFTIQLWECLLRVFSQYWRTPVYIYSKTALCVLTALYIGFSFFNAQNSAQGLQNQMFSIFMLMTIFGNLVQQIMPNFCTQRSLYEVRERPSKTYSWKAFMAANIIVELPWNTLMAFLIFVCWYYPIGLYRNAEPTDSVHERGALMFLLIWSFLLFTSTFAHMMIAGIELAETGGNLANLLFSLCLIFCGVLAPPQSLPGFWIFMYRVSPFTYLVSAMLSTGVSGTNAVCEPVEFLHFDPPSNMTCKDYMADYISTRGGYLENPSATSDCTFCTISSTDTFLSAVSSHYSDAWRNFGIMWAYIIFNIFAAVFIYWLARVPKGKRTKGST.

Residues 1 to 13 (MSLLGTINPNINP) are compositionally biased toward polar residues. The tract at residues 1-21 (MSLLGTINPNINPERTVAGRG) is disordered. Asparagine 137 and asparagine 336 each carry an N-linked (GlcNAc...) asparagine glycan. Residues 158–412 (LEVGTLVRRI…FTNMGFECPE (255 aa)) enclose the ABC transporter 1 domain. 5 helical membrane passes run 523–543 (LTMS…SVFY), 557–577 (ALLF…ILTL), 599–621 (AIAS…NLTL), 632–652 (GAFF…SMLF), and 665–685 (ALVP…FTIP). Asparagine 762 carries an N-linked (GlcNAc...) asparagine glycan. Residues 777–797 (GIMFGFMFFFMFTYLTATEYI) traverse the membrane as a helical segment. A disordered region spans residues 815–843 (QPTGSHDVEKSPEVSSAAKTDEASSKEAT). Residues 853 to 1096 (FQWKDVCYDI…LASYFERNGA (244 aa)) form the ABC transporter 2 domain. 889–896 (GVSGAGKT) contacts ATP. The next 5 helical transmembrane spans lie at 1192-1212 (YIYS…FSFF), 1226-1246 (FSIF…MPNF), 1273-1293 (IIVE…CWYY), 1313-1333 (LMFL…HMMI), and 1352-1372 (LCLI…FWIF). A glycan (N-linked (GlcNAc...) asparagine) is linked at asparagine 1411. Residues 1464-1484 (FGIMWAYIIFNIFAAVFIYWL) traverse the membrane as a helical segment.

This sequence belongs to the ABC transporter superfamily. ABCG family. PDR (TC 3.A.1.205) subfamily.

The protein localises to the cell membrane. The enzyme catalyses fluconazole(in) + ATP + H2O = fluconazole(out) + ADP + phosphate + H(+). It carries out the reaction itraconazole(in) + ATP + H2O = itraconazole(out) + ADP + phosphate + H(+). It catalyses the reaction voriconazole(in) + ATP + H2O = voriconazole(out) + ADP + phosphate + H(+). With respect to regulation, the efflux inhibitor FK506 impairs the transport activity. Its function is as follows. Pleiotropic ABC efflux transporter that shows a strong substrate specificity for the azole class of drugs such as lotrimazole (CLT), fluconazole (FLC), itraconazole (ITC), ketoconazole (KTC), posaconazole (POS), tebuconazole (TEBZ), and voriconazole (VRC). Is also able to transport rhodamine 6G (R-6G), a known substrate for many ABC transporters. Required for normal pathogenesis in a Galleria mellonella (greater wax moth) infection model. The protein is ABC multidrug transporter C of Aspergillus fumigatus (strain ATCC MYA-4609 / CBS 101355 / FGSC A1100 / Af293) (Neosartorya fumigata).